Consider the following 1219-residue polypeptide: Disease resistance-like protein DSC1 (1219 aa).

Positions 9–176 constitute a TIR domain; the sequence is AEFDVFLSFR…EIAVDTFKKL (168 aa). The active site involves glutamate 83. An NB-ARC domain is found at 197–446; it reads LEKLLSWEDL…DIACFFRSEN (250 aa). An ATP-binding site is contributed by 216–222; that stretch reads GMVGIGK. LRR repeat units lie at residues 468–493, 538–563, 597–619, 620–642, 665–689, 690–713, 733–757, 759–780, 804–827, 854–877, and 878–899; these read LVDKCLITLSDNRIEMHDMLQTMAKE, TDKIRGIFLDTSKLRAMRLSAKAFQG, PNELTYLHWHGYPLQSIPLDFDP, KNLVDLKLPHSQLEEIWDDEKDV, AHNLERLNLEGCTSLKKLPSTINCL, EKLIYLNLRDCTSLRSLPKGIKTQ, SENVEVLLLDGTVIKSLPESIQTFR, LALLNLKNCKKLKHLSSDLYKL, MESLEILLMDDTSITEMPKMMHLS, CSRLTDLYLSRCSLYKLPDNIGGL, and SSLQSLCLSGNNIENLPESFNQ.

It belongs to the disease resistance NB-LRR family. As to quaternary structure, interacts with CAMTA3 and DSC2.

The enzyme catalyses NAD(+) + H2O = ADP-D-ribose + nicotinamide + H(+). Its function is as follows. TIR-NB-LRR receptor-like protein involved in plant defense. Acts as a trigger of hypersensitive response (HR). Functions as a guard of CAMTA3, a negative regulator of immunity, during pathogen infection. This is Disease resistance-like protein DSC1 from Arabidopsis thaliana (Mouse-ear cress).